Consider the following 373-residue polypeptide: MSEKKINLLDLDRKAMRALFADLGEKPFRADQLMKWIYHFGVSDFEEMTNINKVLRQKLAARCEIVAPEISSYQKSTDGTIKFAIHVGEGQEVETVYIPEDDRATLCVSSQVGCALECTFCSTAQQGFNRNLTVSEIVGQIWRVSHFLGFAKDTGERPITNVVMMGMGEPLLNLANVIPAMDIMLDDFGFSLSKRRVTLSTSGVVPALDKLGDALDVALAVSIHAPNDELRDILVPVNKKYPLQEFLAGIRRYIAKSNANRGRVTVEYVMLDHINDSTEQAHELAQLMKDTPCKVNLIPFNPYPGSPYGRSSNSRIDRFSKVLMEYGLTVIVRKTRGDDIDAACGQLAGDIRDRTKRLAKKRMQENQISVTMN.

Residue E94 is the Proton acceptor of the active site. In terms of domain architecture, Radical SAM core spans 100–339; sequence EDDRATLCVS…VIVRKTRGDD (240 aa). A disulfide bridge links C107 with C344. Residues C114, C118, and C121 each contribute to the [4Fe-4S] cluster site. Residues 168–169, S200, 222–224, and N301 contribute to the S-adenosyl-L-methionine site; these read GE and SIH. The active-site S-methylcysteine intermediate is the C344.

Belongs to the radical SAM superfamily. RlmN family. [4Fe-4S] cluster serves as cofactor.

The protein resides in the cytoplasm. The catalysed reaction is adenosine(2503) in 23S rRNA + 2 reduced [2Fe-2S]-[ferredoxin] + 2 S-adenosyl-L-methionine = 2-methyladenosine(2503) in 23S rRNA + 5'-deoxyadenosine + L-methionine + 2 oxidized [2Fe-2S]-[ferredoxin] + S-adenosyl-L-homocysteine. It carries out the reaction adenosine(37) in tRNA + 2 reduced [2Fe-2S]-[ferredoxin] + 2 S-adenosyl-L-methionine = 2-methyladenosine(37) in tRNA + 5'-deoxyadenosine + L-methionine + 2 oxidized [2Fe-2S]-[ferredoxin] + S-adenosyl-L-homocysteine. Specifically methylates position 2 of adenine 2503 in 23S rRNA and position 2 of adenine 37 in tRNAs. m2A2503 modification seems to play a crucial role in the proofreading step occurring at the peptidyl transferase center and thus would serve to optimize ribosomal fidelity. This is Dual-specificity RNA methyltransferase RlmN from Shewanella sp. (strain MR-7).